Reading from the N-terminus, the 288-residue chain is Diaminopimelate epimerase (288 aa).

Asn-14 and Asn-67 together coordinate substrate. Cys-76 acts as the Proton donor in catalysis. Residues 77–78 (GN), Asn-166, Asn-199, and 217–218 (ER) contribute to the substrate site. Cys-226 functions as the Proton acceptor in the catalytic mechanism. Substrate is bound at residue 227-228 (GT).

This sequence belongs to the diaminopimelate epimerase family. As to quaternary structure, homodimer.

Its subcellular location is the cytoplasm. The catalysed reaction is (2S,6S)-2,6-diaminopimelate = meso-2,6-diaminopimelate. It functions in the pathway amino-acid biosynthesis; L-lysine biosynthesis via DAP pathway; DL-2,6-diaminopimelate from LL-2,6-diaminopimelate: step 1/1. Catalyzes the stereoinversion of LL-2,6-diaminopimelate (L,L-DAP) to meso-diaminopimelate (meso-DAP), a precursor of L-lysine and an essential component of the bacterial peptidoglycan. This Bacillus cereus (strain ATCC 10987 / NRS 248) protein is Diaminopimelate epimerase.